We begin with the raw amino-acid sequence, 429 residues long: Histidine--tRNA ligase (429 aa).

It belongs to the class-II aminoacyl-tRNA synthetase family. Homodimer.

Its subcellular location is the cytoplasm. The catalysed reaction is tRNA(His) + L-histidine + ATP = L-histidyl-tRNA(His) + AMP + diphosphate + H(+). This chain is Histidine--tRNA ligase, found in Cyanothece sp. (strain PCC 7425 / ATCC 29141).